A 760-amino-acid polypeptide reads, in one-letter code: Striatin-4 (760 aa).

Residues 1–65 are disordered; sequence MMEERAAAAV…PTAGPEPLSL (65 aa). The segment covering 7 to 35 has biased composition (low complexity); that stretch reads AAAVASAASSCRPLGSGTAPNPTAAAPAS. A compositionally biased stretch (gly residues) spans 43–54; sequence PVGKGGGGGGSP. S53 bears the Phosphoserine mark. Residues 69–136 adopt a coiled-coil conformation; the sequence is LHFIQHEWAR…QERAKYHKLK (68 aa). A caveolin-binding region spans residues 71–79; that stretch reads FIQHEWARF. The segment at 165-182 is calmodulin-binding; it reads ENSPLVWKEGRQLLRQYL. A phosphoserine mark is found at S206, S223, and S276. 2 disordered regions span residues 210-233 and 272-346; these read NGAGEPVEGAPRASPGPGGLSGGE and EDED…PHEL. 2 stretches are compositionally biased toward acidic residues: residues 272–283 and 302–317; these read EDEDSDEDDELD and EMEDEDEEDDSEDAIN. The span at 332 to 346 shows a compositional bias: basic and acidic residues; sequence PDPRRCTSEGNPHEL. WD repeat units follow at residues 443 to 482, 496 to 535, 549 to 588, 595 to 635, 642 to 681, 684 to 723, and 730 to 759; these read SHYDGIRSLAFHHSQSALLTASEDGTLKLWNLQKAVTAKK, AHRGPVLAVTMGSNSEYCYSGGADARIHSWKIPDLNMDPY, GHGDAVWGLAFSPTSQRLASCSADGTVRIWDPSSSGPSCL, GEHG…ALLT, SGPAQINQVVSHPSQPLTITAHDDRGIRFLDNRTGKSVHS, AHLDAVTCLAVDPNGVFLMSGSHDCSLRLWSLDNKTCVQE, and KHEEAIHAVACHPSKALIASAGADALAKVF.

It belongs to the WD repeat striatin family. In terms of assembly, part of the core of STRIPAK complexes composed of PP2A catalytic and scaffolding subunits, the striatins (PP2A regulatory subunits), the striatin-associated proteins MOB4, STRIP1 and STRIP2, PDCD10 and members of the STE20 kinases, such as STK24 and STK26. Interacts with CTTNBP2NL. In terms of tissue distribution, mainly expressed in brain but is also expressed at low levels in the kidney.

The protein localises to the cytoplasm. Its subcellular location is the membrane. It is found in the cell projection. It localises to the dendritic spine. Its function is as follows. Calmodulin-binding scaffolding protein which is the center of the striatin-interacting phosphatase and kinase (STRIPAK) complexes. STRIPAK complexes have critical roles in protein (de)phosphorylation and are regulators of multiple signaling pathways including Hippo, MAPK, nuclear receptor and cytoskeleton remodeling. Different types of STRIPAK complexes are involved in a variety of biological processes such as cell growth, differentiation, apoptosis, metabolism and immune regulation. Key regulator of the expanded Hippo signaling pathway by interacting and allowing the inhibition of MAP4K kinases by the STRIPAK complex. The chain is Striatin-4 (Strn4) from Mus musculus (Mouse).